Reading from the N-terminus, the 339-residue chain is Ornithine carbamoyltransferase (339 aa).

Carbamoyl phosphate contacts are provided by residues 56 to 59 (STRT), arginine 107, and 134 to 137 (HPTQ). L-ornithine is bound by residues asparagine 168, aspartate 232, and 236–237 (SM). Residues 274 to 275 (CL) and arginine 320 contribute to the carbamoyl phosphate site.

Belongs to the aspartate/ornithine carbamoyltransferase superfamily. OTCase family.

Its subcellular location is the cytoplasm. It carries out the reaction carbamoyl phosphate + L-ornithine = L-citrulline + phosphate + H(+). It functions in the pathway amino-acid biosynthesis; L-arginine biosynthesis; L-arginine from L-ornithine and carbamoyl phosphate: step 1/3. Reversibly catalyzes the transfer of the carbamoyl group from carbamoyl phosphate (CP) to the N(epsilon) atom of ornithine (ORN) to produce L-citrulline. This chain is Ornithine carbamoyltransferase, found in Buchnera aphidicola subsp. Baizongia pistaciae (strain Bp).